The following is a 191-amino-acid chain: Phosphoheptose isomerase (191 aa).

An SIS domain is found at I34–S191. N49–G51 is a substrate binding site. 2 residues coordinate Zn(2+): H58 and E62. Residues E62, N91–D92, T117–S119, S122, and Q169 each bind substrate. Zn(2+)-binding residues include Q169 and H177.

Belongs to the SIS family. GmhA subfamily. Zn(2+) serves as cofactor.

The protein resides in the cytoplasm. The enzyme catalyses 2 D-sedoheptulose 7-phosphate = D-glycero-alpha-D-manno-heptose 7-phosphate + D-glycero-beta-D-manno-heptose 7-phosphate. It participates in carbohydrate biosynthesis; D-glycero-D-manno-heptose 7-phosphate biosynthesis; D-glycero-alpha-D-manno-heptose 7-phosphate and D-glycero-beta-D-manno-heptose 7-phosphate from sedoheptulose 7-phosphate: step 1/1. Its function is as follows. Catalyzes the isomerization of sedoheptulose 7-phosphate in D-glycero-D-manno-heptose 7-phosphate. This is Phosphoheptose isomerase from Aquifex aeolicus (strain VF5).